Consider the following 61-residue polypeptide: Large ribosomal subunit protein uL30 (61 aa).

The protein belongs to the universal ribosomal protein uL30 family. In terms of assembly, part of the 50S ribosomal subunit.

The sequence is that of Large ribosomal subunit protein uL30 from Jannaschia sp. (strain CCS1).